The primary structure comprises 110 residues: RNA silencing suppressor (110 aa).

Residues 50–53 (RRRR) are basic. The C4-type zinc-finger motif lies at 60 to 81 (CERCYRVYPPLPFSKKCDNRTC).

It belongs to the carlaviruses nucleic acid-binding protein family.

Suppressor of viral-induced RNA silencing. The potential mechanism of action is based on sequestering siRNAs. This Helenium virus S (HelVS) protein is RNA silencing suppressor.